Here is an 836-residue protein sequence, read N- to C-terminus: Protein IWS1 homolog A (836 aa).

Positions methionine 1–tyrosine 542 are disordered. Composition is skewed to basic and acidic residues over residues glutamine 20–serine 36, histidine 43–proline 122, glutamate 133–arginine 148, aspartate 157–proline 186, aspartate 206–serine 218, valine 288–aspartate 309, arginine 370–glutamine 386, and glutamate 458–aspartate 469. The span at serine 476 to leucine 485 shows a compositional bias: acidic residues. Basic and acidic residues predominate over residues aspartate 533–tyrosine 542. Positions serine 631–leucine 709 constitute a TFIIS N-terminal domain. A disordered region spans residues lysine 714–aspartate 746. Over residues methionine 716–glutamate 727 the composition is skewed to basic and acidic residues.

Belongs to the IWS1 family.

The protein localises to the nucleus. In terms of biological role, transcription factor which plays a key role in defining the composition of the RNA polymerase II (RNAPII) elongation complex and in modulating the production of mature mRNA transcripts. The chain is Protein IWS1 homolog A (iws1-a) from Xenopus laevis (African clawed frog).